A 1113-amino-acid polypeptide reads, in one-letter code: Protein MGA2 (1113 aa).

The segment at 91–114 is disordered; it reads TPLEEEMESNRALKEEEEDEHENK. Ser255 bears the Phosphoserine mark. 2 stretches are compositionally biased toward polar residues: residues 344-357 and 437-452; these read DTTK…SSRR and HIPS…SESF. Disordered regions lie at residues 344–376 and 437–462; these read DTTK…NNQL and HIPS…NDNP. Residue Ser467 is modified to Phosphoserine. One can recognise an IPT/TIG domain in the interval 530-610; that stretch reads PSINRVIPSQ…NENNNDDLPQ (81 aa). The tract at residues 658-687 is disordered; that stretch reads IVGNDSPDSGTNGNSCSKSTGPSPNQHSMN. Positions 663 to 687 are enriched in polar residues; it reads SPDSGTNGNSCSKSTGPSPNQHSMN. ANK repeat units follow at residues 719-748 and 752-781; these read LGRT…RVND and FGLT…NYSL. The chain crosses the membrane as a helical span at residues 1037 to 1054; it reads MLIFFWIPLTLLLLTWFI.

Its subcellular location is the membrane. The chain is Protein MGA2 (MGA2) from Saccharomyces cerevisiae (strain ATCC 204508 / S288c) (Baker's yeast).